The sequence spans 118 residues: Large ribosomal subunit protein uL18 (118 aa).

Belongs to the universal ribosomal protein uL18 family. In terms of assembly, part of the 50S ribosomal subunit; part of the 5S rRNA/L5/L18/L25 subcomplex. Contacts the 5S and 23S rRNAs.

This is one of the proteins that bind and probably mediate the attachment of the 5S RNA into the large ribosomal subunit, where it forms part of the central protuberance. This Nitratiruptor sp. (strain SB155-2) protein is Large ribosomal subunit protein uL18.